The following is a 422-amino-acid chain: Putative serpin-Z8 (422 aa).

The tract at residues 369–393 is RCL; sequence GTVAAAATMTRMLPSGVPPPPVDFV.

The protein belongs to the serpin family.

In terms of biological role, probable serine protease inhibitor. The protein is Putative serpin-Z8 of Oryza sativa subsp. japonica (Rice).